Consider the following 160-residue polypeptide: Dr hemagglutinin structural subunit (160 aa).

The first 21 residues, 1–21 (MKKLAIMAAASMVFAVSSAHA), serve as a signal peptide directing secretion. Positions 22-75 (GFTPSGTTGTTKLTVTEECQVRVGDLTVAKTRGQLTDAAPIGPVTVQALGCDAR) are receptor-binding.

This sequence belongs to the Dr-adhesin family.

The protein localises to the fimbrium. In terms of biological role, hemagglutinins of uropathogenic E.coli mediate adherence to the upper urinary tract. These adhesins bind to the Dr blood group antigen and also agglutinate human erythrocytes in the presence of D-mannose (mannose-resistant hemagglutination (MRHA)). The chain is Dr hemagglutinin structural subunit (draA) from Escherichia coli.